The sequence spans 255 residues: MKIGVFDSGVGGFSVLKSLLKAQLFDEIIYYGDSARVPYGTKDPTTIKQFGLEALDFFKPHQIKLLIVACNTASALALEEMQKHSKIPIVGVIEPSILAIKQQVKDKNAPILVLGTKATIQSNAYDNALKQQGYLNVSHLATSLFVPLIEENILEGELLETCMRYYFTPLKILPEVIILGCTHFPLIAQKIEGYFMGHFALPTPPLLIHSGDAIVGYLQQKYALKKNAHAFPKVEFHASGDVVWLEKQAKEWLKL.

Residues 7-8 (DS) and 39-40 (YG) each bind substrate. Catalysis depends on Cys-70, which acts as the Proton donor/acceptor. A substrate-binding site is contributed by 71 to 72 (NT). Cys-181 serves as the catalytic Proton donor/acceptor. 182–183 (TH) is a binding site for substrate.

It belongs to the aspartate/glutamate racemases family.

It catalyses the reaction L-glutamate = D-glutamate. The protein operates within cell wall biogenesis; peptidoglycan biosynthesis. Functionally, provides the (R)-glutamate required for cell wall biosynthesis. In Helicobacter pylori (strain P12), this protein is Glutamate racemase.